A 247-amino-acid polypeptide reads, in one-letter code: Adenosylcobinamide-GDP ribazoletransferase (247 aa).

5 helical membrane passes run 34–54, 59–79, 113–133, 138–158, and 194–214; these read IITF…VFMV, CGVP…TGGF, GGLA…ELTL, ILAS…LLMY, and VLLP…AIFI.

The protein belongs to the CobS family. Mg(2+) serves as cofactor.

It localises to the cell inner membrane. It carries out the reaction alpha-ribazole + adenosylcob(III)inamide-GDP = adenosylcob(III)alamin + GMP + H(+). The enzyme catalyses alpha-ribazole 5'-phosphate + adenosylcob(III)inamide-GDP = adenosylcob(III)alamin 5'-phosphate + GMP + H(+). The protein operates within cofactor biosynthesis; adenosylcobalamin biosynthesis; adenosylcobalamin from cob(II)yrinate a,c-diamide: step 7/7. Joins adenosylcobinamide-GDP and alpha-ribazole to generate adenosylcobalamin (Ado-cobalamin). Also synthesizes adenosylcobalamin 5'-phosphate from adenosylcobinamide-GDP and alpha-ribazole 5'-phosphate. The sequence is that of Adenosylcobinamide-GDP ribazoletransferase from Escherichia coli O127:H6 (strain E2348/69 / EPEC).